Consider the following 1766-residue polypeptide: DNA-directed RNA polymerase II subunit RPB1-A (1766 aa).

Positions 69, 72, 79, and 82 each coordinate Zn(2+). The Mg(2+) site is built by Asp487, Asp489, and Asp491. The bridging helix stretch occupies residues 813–825; that stretch reads PHEFFFHTMAGRE. The segment at 1660–1766 is disordered; sequence HAMSSAAPPS…EFGDEEEEEQ (107 aa). Over residues 1706 to 1716 the composition is skewed to basic and acidic residues; that stretch reads RGDEPSTHRSD. Low complexity predominate over residues 1742-1756; sequence PTAKTPQQAAPPTAA.

Belongs to the RNA polymerase beta' chain family. In terms of assembly, component of the RNA polymerase II (Pol II) complex consisting of 12 subunits.

Its subcellular location is the nucleus. It carries out the reaction RNA(n) + a ribonucleoside 5'-triphosphate = RNA(n+1) + diphosphate. Its function is as follows. DNA-dependent RNA polymerase catalyzes the transcription of DNA into RNA using the four ribonucleoside triphosphates as substrates. Largest and catalytic component of RNA polymerase II which synthesizes mRNA precursors and many functional non-coding RNAs. Forms the polymerase active center together with the second largest subunit. Pol II is the central component of the basal RNA polymerase II transcription machinery. It is composed of mobile elements that move relative to each other. RPB1 is part of the core element with the central large cleft, the clamp element that moves to open and close the cleft and the jaws that are thought to grab the incoming DNA template. At the start of transcription, a single-stranded DNA template strand of the promoter is positioned within the central active site cleft of Pol II. A bridging helix emanates from RPB1 and crosses the cleft near the catalytic site and is thought to promote translocation of Pol II by acting as a ratchet that moves the RNA-DNA hybrid through the active site by switching from straight to bent conformations at each step of nucleotide addition. During transcription elongation, Pol II moves on the template as the transcript elongates. The protein is DNA-directed RNA polymerase II subunit RPB1-A (TRP4.8) of Trypanosoma brucei brucei.